The sequence spans 415 residues: tRNA(Met) cytidine acetate ligase (415 aa).

ATP contacts are provided by residues 7 to 20 (IVEYNPFHNGHLYH), Gly102, Asn165, and 190 to 191 (RI).

The protein belongs to the TmcAL family.

It localises to the cytoplasm. The enzyme catalyses cytidine(34) in elongator tRNA(Met) + acetate + ATP = N(4)-acetylcytidine(34) in elongator tRNA(Met) + AMP + diphosphate. Functionally, catalyzes the formation of N(4)-acetylcytidine (ac(4)C) at the wobble position of elongator tRNA(Met), using acetate and ATP as substrates. First activates an acetate ion to form acetyladenylate (Ac-AMP) and then transfers the acetyl group to tRNA to form ac(4)C34. The sequence is that of tRNA(Met) cytidine acetate ligase from Acetivibrio thermocellus (strain ATCC 27405 / DSM 1237 / JCM 9322 / NBRC 103400 / NCIMB 10682 / NRRL B-4536 / VPI 7372) (Clostridium thermocellum).